The primary structure comprises 363 residues: tRNA-specific 2-thiouridylase MnmA (363 aa).

ATP is bound by residues A6–S13 and L32. The Nucleophile role is filled by C101. An intrachain disulfide couples C101 to C193. Residue G125 participates in ATP binding. The tract at residues K143–Q145 is interaction with tRNA. C193 functions as the Cysteine persulfide intermediate in the catalytic mechanism.

It belongs to the MnmA/TRMU family.

Its subcellular location is the cytoplasm. It carries out the reaction S-sulfanyl-L-cysteinyl-[protein] + uridine(34) in tRNA + AH2 + ATP = 2-thiouridine(34) in tRNA + L-cysteinyl-[protein] + A + AMP + diphosphate + H(+). In terms of biological role, catalyzes the 2-thiolation of uridine at the wobble position (U34) of tRNA, leading to the formation of s(2)U34. In Mycobacterium marinum (strain ATCC BAA-535 / M), this protein is tRNA-specific 2-thiouridylase MnmA.